Consider the following 442-residue polypeptide: Proline--tRNA ligase (442 aa).

Belongs to the class-II aminoacyl-tRNA synthetase family. ProS type 2 subfamily. In terms of assembly, homodimer.

It is found in the cytoplasm. The catalysed reaction is tRNA(Pro) + L-proline + ATP = L-prolyl-tRNA(Pro) + AMP + diphosphate. In terms of biological role, catalyzes the attachment of proline to tRNA(Pro) in a two-step reaction: proline is first activated by ATP to form Pro-AMP and then transferred to the acceptor end of tRNA(Pro). In Brucella suis (strain ATCC 23445 / NCTC 10510), this protein is Proline--tRNA ligase.